The sequence spans 250 residues: Iron-sulfur assembly protein 1 (250 aa).

The disordered stretch occupies residues 54 to 89 (AADSVSPDSQRPGKKPFKFIVSNQSKSSKASKSPKW). Positions 75–89 (SNQSKSSKASKSPKW) are enriched in low complexity. Residues C178, C242, and C244 each coordinate Fe cation.

It belongs to the HesB/IscA family.

It localises to the mitochondrion matrix. Functionally, involved in the assembly of mitochondrial and cytoplasmic iron-sulfur proteins. Probably involved in the binding of an intermediate of Fe/S cluster assembly. The protein is Iron-sulfur assembly protein 1 (ISA1) of Saccharomyces cerevisiae (strain ATCC 204508 / S288c) (Baker's yeast).